Here is a 541-residue protein sequence, read N- to C-terminus: Chaperonin GroEL (541 aa).

ATP is bound by residues 29-32, 86-90, Gly413, 477-479, and Asp493; these read TLGP, DGTTT, and DAL.

This sequence belongs to the chaperonin (HSP60) family. As to quaternary structure, forms a cylinder of 14 subunits composed of two heptameric rings stacked back-to-back. Interacts with the co-chaperonin GroES.

It localises to the cytoplasm. The catalysed reaction is ATP + H2O + a folded polypeptide = ADP + phosphate + an unfolded polypeptide.. In terms of biological role, together with its co-chaperonin GroES, plays an essential role in assisting protein folding. The GroEL-GroES system forms a nano-cage that allows encapsulation of the non-native substrate proteins and provides a physical environment optimized to promote and accelerate protein folding. In Clostridium botulinum (strain 657 / Type Ba4), this protein is Chaperonin GroEL.